A 498-amino-acid polypeptide reads, in one-letter code: Trichoplein keratin filament-binding protein (498 aa).

Positions Cys11–Arg39 form a coiled coil. Glycyl lysine isopeptide (Lys-Gly) (interchain with G-Cter in ubiquitin) cross-links involve residues Lys50 and Lys57. Coiled-coil stretches lie at residues Ala66–Glu136, Val163–Glu353, and Leu380–Thr479. Residues Lys73 to Asn498 are interaction with keratin proteins. A disordered region spans residues Glu167–Asn189. Over residues Met168–Asn189 the composition is skewed to basic and acidic residues. Residues Lys259–Glu425 form a trichohyalin/plectin homology domain region. The disordered stretch occupies residues Gln447–Asn498.

Belongs to the TCHP family. Interacts specifically with keratin proteins including, KRT5, KRT6A, KRT8, KRT14, KRT16 and KRT18. Interacts with KCTD17. Ubiquitinated. Ubiquitination by the BCR(KCTD17) E3 ubiquitin ligase complex results in proteasomal degradation, and induces ciliogenesis. As to expression, expressed at high levels in normal urothelial and breast epithelial cells. Also expressed in the smooth muscle and endothelial cells. Reduced expression seen in advanced bladder and breast carcinomas (at protein level). Ubiquitous. Expressed at highest levels in the heart, skeletal muscle, kidney, liver and testis.

Its subcellular location is the cytoplasm. The protein resides in the cytoskeleton. It is found in the cell membrane. It localises to the mitochondrion. The protein localises to the cell junction. Its subcellular location is the desmosome. The protein resides in the microtubule organizing center. It is found in the centrosome. Functionally, tumor suppressor which has the ability to inhibit cell growth and be pro-apoptotic during cell stress. Inhibits cell growth in bladder and prostate cancer cells by a down-regulation of HSPB1 by inhibiting its phosphorylation. May act as a 'capping' or 'branching' protein for keratin filaments in the cell periphery. May regulate K8/K18 filament and desmosome organization mainly at the apical or peripheral regions of simple epithelial cells. Is a negative regulator of ciliogenesis. This Homo sapiens (Human) protein is Trichoplein keratin filament-binding protein.